The chain runs to 98 residues: Prolactin-releasing peptide (98 aa).

The first 22 residues, 1–22 (MKAVGAWLLCLLLLGLALQGAA), serve as a signal peptide directing secretion. The residue at position 53 (F53) is a Phenylalanine amide. Positions 58-98 (AAPGDGPRPGPRRELACIPLEGGAEPSRALLGRLTAQLVQE) are excised as a propeptide.

In terms of tissue distribution, more abundantly expressed in the brainstem than the hypothalamus.

It localises to the secreted. Stimulates prolactin (PRL) release and regulates the expression of prolactin through its receptor GPR10. May stimulate lactotrophs directly to secrete PRL. This is Prolactin-releasing peptide (PRLH) from Ovis aries (Sheep).